Reading from the N-terminus, the 347-residue chain is Protein-glutamate methylesterase/protein-glutamine glutaminase 1 (347 aa).

The 118-residue stretch at 6–123 (RVLVVDDSAT…LRPFGDLAEK (118 aa)) folds into the Response regulatory domain. Asp57 carries the 4-aspartylphosphate modification. The CheB-type methylesterase domain occupies 150–342 (FRVGRKIVAI…EEILKMTAAR (193 aa)). Catalysis depends on residues Ser162, His188, and Asp284.

The protein belongs to the CheB family. Post-translationally, phosphorylated by CheA. Phosphorylation of the N-terminal regulatory domain activates the methylesterase activity.

It is found in the cytoplasm. It catalyses the reaction [protein]-L-glutamate 5-O-methyl ester + H2O = L-glutamyl-[protein] + methanol + H(+). The enzyme catalyses L-glutaminyl-[protein] + H2O = L-glutamyl-[protein] + NH4(+). Functionally, involved in chemotaxis. Part of a chemotaxis signal transduction system that modulates chemotaxis in response to various stimuli. Catalyzes the demethylation of specific methylglutamate residues introduced into the chemoreceptors (methyl-accepting chemotaxis proteins or MCP) by CheR. Also mediates the irreversible deamidation of specific glutamine residues to glutamic acid. The protein is Protein-glutamate methylesterase/protein-glutamine glutaminase 1 of Rhizobium johnstonii (strain DSM 114642 / LMG 32736 / 3841) (Rhizobium leguminosarum bv. viciae).